We begin with the raw amino-acid sequence, 803 residues long: Leucine--tRNA ligase (803 aa).

Residues 40–51 (PYPSGAGLHVGH) carry the 'HIGH' region motif. The 'KMSKS' region signature appears at 575–579 (KMSKS). Position 578 (Lys578) interacts with ATP.

Belongs to the class-I aminoacyl-tRNA synthetase family.

The protein localises to the cytoplasm. It catalyses the reaction tRNA(Leu) + L-leucine + ATP = L-leucyl-tRNA(Leu) + AMP + diphosphate. The protein is Leucine--tRNA ligase of Listeria welshimeri serovar 6b (strain ATCC 35897 / DSM 20650 / CCUG 15529 / CIP 8149 / NCTC 11857 / SLCC 5334 / V8).